The chain runs to 163 residues: MSDSPRRLTHVDESGAARMVDVSGKDVTARTATASGRVLVSETVVGLLRGEGVPKGDALGVARVAGIMAAKQTPTLIPLCHPLSISGVSVDLEVTDDPEPSVAIRATVKTTDRTGVEMEALTAVSVAALTVVDMVKAVDKAAVVTDIRVETKTGGKSGDWSRP.

Substrate-binding positions include Leu79 to His81 and Met118 to Glu119. Residue Asp133 is part of the active site.

It belongs to the MoaC family. As to quaternary structure, homohexamer; trimer of dimers.

It carries out the reaction (8S)-3',8-cyclo-7,8-dihydroguanosine 5'-triphosphate = cyclic pyranopterin phosphate + diphosphate. It participates in cofactor biosynthesis; molybdopterin biosynthesis. Functionally, catalyzes the conversion of (8S)-3',8-cyclo-7,8-dihydroguanosine 5'-triphosphate to cyclic pyranopterin monophosphate (cPMP). The chain is Cyclic pyranopterin monophosphate synthase from Nocardioides sp. (strain ATCC BAA-499 / JS614).